Reading from the N-terminus, the 377-residue chain is Geranylgeranyl transferase type-1 subunit beta (377 aa).

4 PFTB repeats span residues 144 to 186, 193 to 234, 245 to 284, and 291 to 333; these read KEAC…YMLN, MKKA…CLMG, LNRI…KLLK, and FEKN…SLME. Geranylgeranyl diphosphate contacts are provided by residues 219 to 221 and 263 to 266; these read HGG and RPNK. Residues Asp269 and Cys271 each coordinate Zn(2+). Residue 272–275 coordinates geranylgeranyl diphosphate; the sequence is YSFW. Residue His321 coordinates Zn(2+).

It belongs to the protein prenyltransferase subunit beta family. In terms of assembly, heterodimer of FNTA and PGGT1B. PGGT1B mediates interaction with substrate peptides. It depends on Zn(2+) as a cofactor. Mg(2+) serves as cofactor.

It carries out the reaction geranylgeranyl diphosphate + L-cysteinyl-[protein] = S-geranylgeranyl-L-cysteinyl-[protein] + diphosphate. Catalyzes the transfer of a geranyl-geranyl moiety from geranyl-geranyl pyrophosphate to a cysteine at the fourth position from the C-terminus of proteins having the C-terminal sequence Cys-aliphatic-aliphatic-X. Known substrates include RAC1, RAC2, RAP1A and RAP1B. This Bos taurus (Bovine) protein is Geranylgeranyl transferase type-1 subunit beta (PGGT1B).